The sequence spans 360 residues: Peptide chain release factor 1 (360 aa).

The residue at position 237 (glutamine 237) is an N5-methylglutamine.

The protein belongs to the prokaryotic/mitochondrial release factor family. Post-translationally, methylated by PrmC. Methylation increases the termination efficiency of RF1.

The protein localises to the cytoplasm. Peptide chain release factor 1 directs the termination of translation in response to the peptide chain termination codons UAG and UAA. This chain is Peptide chain release factor 1, found in Pseudomonas aeruginosa (strain LESB58).